Here is a 98-residue protein sequence, read N- to C-terminus: NADH-ubiquinone oxidoreductase chain 4L (98 aa).

3 helical membrane passes run 1-21 (MTSINLNLTMAFSLALTGVLV), 28-48 (STLLCLEGMMLSLFILMALLI), and 59-79 (APLILLVFSACEAGVGLALLV).

This sequence belongs to the complex I subunit 4L family. Core subunit of respiratory chain NADH dehydrogenase (Complex I) which is composed of 45 different subunits.

It localises to the mitochondrion inner membrane. It carries out the reaction a ubiquinone + NADH + 5 H(+)(in) = a ubiquinol + NAD(+) + 4 H(+)(out). Its function is as follows. Core subunit of the mitochondrial membrane respiratory chain NADH dehydrogenase (Complex I) which catalyzes electron transfer from NADH through the respiratory chain, using ubiquinone as an electron acceptor. Part of the enzyme membrane arm which is embedded in the lipid bilayer and involved in proton translocation. In Dactylopsila trivirgata (Striped possum), this protein is NADH-ubiquinone oxidoreductase chain 4L (MT-ND4L).